Here is a 367-residue protein sequence, read N- to C-terminus: Phosphoribosylaminoimidazole-succinocarboxamide synthase (367 aa).

Belongs to the SAICAR synthetase family.

It catalyses the reaction 5-amino-1-(5-phospho-D-ribosyl)imidazole-4-carboxylate + L-aspartate + ATP = (2S)-2-[5-amino-1-(5-phospho-beta-D-ribosyl)imidazole-4-carboxamido]succinate + ADP + phosphate + 2 H(+). It participates in purine metabolism; IMP biosynthesis via de novo pathway; 5-amino-1-(5-phospho-D-ribosyl)imidazole-4-carboxamide from 5-amino-1-(5-phospho-D-ribosyl)imidazole-4-carboxylate: step 1/2. The protein is Phosphoribosylaminoimidazole-succinocarboxamide synthase of Shewanella oneidensis (strain ATCC 700550 / JCM 31522 / CIP 106686 / LMG 19005 / NCIMB 14063 / MR-1).